Consider the following 65-residue polypeptide: Large ribosomal subunit protein bL35 (65 aa).

The segment at methionine 1 to asparagine 28 is disordered.

It belongs to the bacterial ribosomal protein bL35 family.

The polypeptide is Large ribosomal subunit protein bL35 (Solidesulfovibrio magneticus (strain ATCC 700980 / DSM 13731 / RS-1) (Desulfovibrio magneticus)).